Here is a 668-residue protein sequence, read N- to C-terminus: Major S-layer protein (668 aa).

Positions 1–24 are cleaved as a signal peptide; the sequence is MKRFAAVTLAALMLLTVFASAASA. 10 N-linked (GlcNAc...) asparagine glycosylation sites follow: N36, N65, N111, N265, N583, N596, N602, N608, N617, and N635. The segment at 584 to 650 is disordered; sequence ETTSITKPDE…ESNGSPGFGV (67 aa). The segment covering 596–611 has biased composition (polar residues); that stretch reads NETVSDNETMPDNTSS. Residues 631-641 show a composition bias toward acidic residues; sequence EPTDNETEPDE. A helical membrane pass occupies residues 644–664; it reads GSPGFGVVLGLAGLLGVVYLV.

Belongs to the Methanosarcinales S-layer protein family. Glycosylated.

It localises to the secreted. The protein resides in the cell wall. It is found in the S-layer. The protein localises to the cell membrane. Its function is as follows. S-layer protein. The S-layer is a paracrystalline mono-layered assembly of proteins which coat the surface of the cell. This Methanosarcina barkeri (strain Fusaro / DSM 804) protein is Major S-layer protein.